Reading from the N-terminus, the 157-residue chain is Small ribosomal subunit protein uS7 (157 aa).

The protein belongs to the universal ribosomal protein uS7 family. Part of the 30S ribosomal subunit. Contacts proteins S9 and S11.

Functionally, one of the primary rRNA binding proteins, it binds directly to 16S rRNA where it nucleates assembly of the head domain of the 30S subunit. Is located at the subunit interface close to the decoding center, probably blocks exit of the E-site tRNA. The polypeptide is Small ribosomal subunit protein uS7 (Bdellovibrio bacteriovorus (strain ATCC 15356 / DSM 50701 / NCIMB 9529 / HD100)).